Here is a 107-residue protein sequence, read N- to C-terminus: Large ribosomal subunit protein uL24 (107 aa).

The protein belongs to the universal ribosomal protein uL24 family. Part of the 50S ribosomal subunit.

Functionally, one of two assembly initiator proteins, it binds directly to the 5'-end of the 23S rRNA, where it nucleates assembly of the 50S subunit. One of the proteins that surrounds the polypeptide exit tunnel on the outside of the subunit. This chain is Large ribosomal subunit protein uL24, found in Streptomyces coelicolor (strain ATCC BAA-471 / A3(2) / M145).